The following is a 308-amino-acid chain: Probable GTP 3',8-cyclase (308 aa).

The 221-residue stretch at 4-224 folds into the Radical SAM core domain; it reads RFGRPLEDLR…QIRKKHFRPR (221 aa). Residue Arg-13 coordinates GTP. 3 residues coordinate [4Fe-4S] cluster: Cys-20, Cys-24, and Cys-27. Lys-60 contacts GTP. S-adenosyl-L-methionine is bound at residue Gly-64. GTP is bound at residue Thr-90. Ser-114 lines the S-adenosyl-L-methionine pocket. Lys-151 is a GTP binding site. [4Fe-4S] cluster is bound by residues Cys-245 and Cys-248. 250–252 lines the GTP pocket; it reads RIR. Cys-262 provides a ligand contact to [4Fe-4S] cluster.

Belongs to the radical SAM superfamily. MoaA family. It depends on [4Fe-4S] cluster as a cofactor.

The enzyme catalyses GTP + AH2 + S-adenosyl-L-methionine = (8S)-3',8-cyclo-7,8-dihydroguanosine 5'-triphosphate + 5'-deoxyadenosine + L-methionine + A + H(+). It participates in cofactor biosynthesis; molybdopterin biosynthesis. Catalyzes the cyclization of GTP to (8S)-3',8-cyclo-7,8-dihydroguanosine 5'-triphosphate. The sequence is that of Probable GTP 3',8-cyclase from Saccharolobus islandicus (strain M.16.27) (Sulfolobus islandicus).